The primary structure comprises 829 residues: High affinity cAMP-specific and IBMX-insensitive 3',5'-cyclic phosphodiesterase 8A (829 aa).

The tract at residues 16-46 is disordered; that stretch reads EDAPSPAAPPLSSGGPRLPQGQKTAALPRTR. At Ser-20 the chain carries Phosphoserine. The PAS domain occupies 213 to 283; that stretch reads ACNSVFTALE…DTINSCIRIG (71 aa). The 43-residue stretch at 287-329 folds into the PAC domain; the sequence is QGIYYAKKKNGDNIQQNVKIIPVIGQGGKIRHYVSIIRVCNGN. Residues 341 to 360 form a disordered region; that stretch reads SDTHTDNQTGKHKDRRKGSL. At Ser-359 the chain carries Phosphoserine; by PKA. Phosphoserine is present on residues Ser-386 and Ser-457. The tract at residues 454–461 is involved in RAF1-binding; the sequence is RRLSGNEY. A Phosphotyrosine modification is found at Tyr-461. Residues 480–820 enclose the PDEase domain; the sequence is SLDDVPPRIA…KYWKGLDEMK (341 aa). The active-site Proton donor is His-556. Residues His-560, His-596, Asp-597, and Asp-726 each contribute to the a divalent metal cation site.

It belongs to the cyclic nucleotide phosphodiesterase family. PDE8 subfamily. In terms of assembly, interacts with RAF1. The interaction promotes RAF1 activity. Requires a divalent metal cation as cofactor. Post-translationally, phosphorylated at Ser-359 by PKA under elevated cAMP conditions, this enhances catalytic activity. Expressed in most tissues except thymus and peripheral blood leukocytes. Highest levels in testis, ovary, small intestine and colon.

The enzyme catalyses 3',5'-cyclic AMP + H2O = AMP + H(+). It functions in the pathway purine metabolism; 3',5'-cyclic AMP degradation; AMP from 3',5'-cyclic AMP: step 1/1. Its activity is regulated as follows. Inhibited by dipyridimole. Insensitive to selective PDE inhibitors including rolipram and zaprinast as well as to the non-selective inhibitor, IBMX. Unaffected by cGMP. Its function is as follows. Hydrolyzes the second messenger cAMP, which is a key regulator of many important physiological processes. May be involved in maintaining basal levels of the cyclic nucleotide and/or in the cAMP regulation of germ cell development. Binding to RAF1 reduces RAF1 'Ser-259' inhibitory-phosphorylation and stimulates RAF1-dependent EGF-activated ERK-signaling. Protects against cell death induced by hydrogen peroxide and staurosporine. This chain is High affinity cAMP-specific and IBMX-insensitive 3',5'-cyclic phosphodiesterase 8A (PDE8A), found in Homo sapiens (Human).